A 510-amino-acid polypeptide reads, in one-letter code: Probable lipid II flippase MurJ (510 aa).

12 helical membrane-spanning segments follow: residues 13 to 33 (DVVI…LFAN), 81 to 101 (GLVS…AALF), 130 to 150 (FPYL…NTIG), 154 to 174 (VMSF…LFLA), 182 to 202 (LALA…QIPF), 240 to 260 (INLL…ISWL), 266 to 286 (LLEF…LPTL), 315 to 335 (IFLL…PMLL), 357 to 377 (AFNA…GYYA), 396 to 416 (MGFN…ASAM), 443 to 463 (VFFV…WYYV), and 481 to 501 (LVWL…LLGV).

Belongs to the MurJ/MviN family.

It localises to the cell inner membrane. It functions in the pathway cell wall biogenesis; peptidoglycan biosynthesis. Its function is as follows. Involved in peptidoglycan biosynthesis. Transports lipid-linked peptidoglycan precursors from the inner to the outer leaflet of the cytoplasmic membrane. The chain is Probable lipid II flippase MurJ from Haemophilus influenzae (strain ATCC 51907 / DSM 11121 / KW20 / Rd).